A 1102-amino-acid chain; its full sequence is Carbamoyl phosphate synthase large chain (1102 aa).

Residues 1 to 408 (MPKRTDIQSV…ALQKALRSLE (408 aa)) are carboxyphosphate synthetic domain. The ATP site is built by Arg-129, Arg-175, Gly-181, Gly-182, Glu-214, Ile-216, Glu-221, Gly-247, Val-248, His-249, Gln-291, and Glu-305. Residues 138 to 334 (AVRAKIGHGE…IAKIAAKLAV (197 aa)) form the ATP-grasp 1 domain. 3 residues coordinate Mg(2+): Gln-291, Glu-305, and Asn-307. Mn(2+) contacts are provided by Gln-291, Glu-305, and Asn-307. Residues 409–551 (KKGSQFTFVG…YFYSSYDEES (143 aa)) form an oligomerization domain region. The segment at 552 to 954 (EVAPREKPAV…AYAKSQAGAY (403 aa)) is carbamoyl phosphate synthetic domain. Residues 682 to 873 (GQVLAEAGLP…LAKAAARISL (192 aa)) enclose the ATP-grasp 2 domain. ATP is bound by residues Arg-718, Arg-757, Leu-759, Glu-764, Gly-789, Ile-790, His-791, Ser-792, Gln-832, and Glu-844. Gln-832, Glu-844, and Asn-846 together coordinate Mg(2+). The Mn(2+) site is built by Gln-832, Glu-844, and Asn-846. Residues 955 to 1100 (GPLPTKGRAF…QEHAEHLTAA (146 aa)) form the MGS-like domain. The tract at residues 955–1102 (GPLPTKGRAF…HAEHLTAARD (148 aa)) is allosteric domain.

This sequence belongs to the CarB family. Composed of two chains; the small (or glutamine) chain promotes the hydrolysis of glutamine to ammonia, which is used by the large (or ammonia) chain to synthesize carbamoyl phosphate. Tetramer of heterodimers (alpha,beta)4. Mg(2+) is required as a cofactor. Requires Mn(2+) as cofactor.

The catalysed reaction is hydrogencarbonate + L-glutamine + 2 ATP + H2O = carbamoyl phosphate + L-glutamate + 2 ADP + phosphate + 2 H(+). It catalyses the reaction hydrogencarbonate + NH4(+) + 2 ATP = carbamoyl phosphate + 2 ADP + phosphate + 2 H(+). It participates in amino-acid biosynthesis; L-arginine biosynthesis; carbamoyl phosphate from bicarbonate: step 1/1. Its pathway is pyrimidine metabolism; UMP biosynthesis via de novo pathway; (S)-dihydroorotate from bicarbonate: step 1/3. Large subunit of the glutamine-dependent carbamoyl phosphate synthetase (CPSase). CPSase catalyzes the formation of carbamoyl phosphate from the ammonia moiety of glutamine, carbonate, and phosphate donated by ATP, constituting the first step of 2 biosynthetic pathways, one leading to arginine and/or urea and the other to pyrimidine nucleotides. The large subunit (synthetase) binds the substrates ammonia (free or transferred from glutamine from the small subunit), hydrogencarbonate and ATP and carries out an ATP-coupled ligase reaction, activating hydrogencarbonate by forming carboxy phosphate which reacts with ammonia to form carbamoyl phosphate. The protein is Carbamoyl phosphate synthase large chain of Streptomyces avermitilis (strain ATCC 31267 / DSM 46492 / JCM 5070 / NBRC 14893 / NCIMB 12804 / NRRL 8165 / MA-4680).